Reading from the N-terminus, the 341-residue chain is BZIP domain-containing transcription factor BZP4 (341 aa).

Composition is skewed to polar residues over residues 1-32 (MESS…PTNE), 61-76 (LTES…SHSL), 128-139 (PLTSHSRSQITH), and 150-163 (YSSS…SPVS). Disordered regions lie at residues 1–95 (MESS…PHGM) and 118–254 (TNHS…DKKQ). A compositionally biased stretch (low complexity) spans 178–192 (SPSSSSFPSSIPRTP). Basic and acidic residues-rich tracts occupy residues 225-234 (TGDRKHEKDS) and 242-254 (EEYK…DKKQ). The tract at residues 250–269 (KDKKQVRNRIGARRFRAKRK) is basic motif. The region spanning 250-308 (KDKKQVRNRIGARRFRAKRKDYVNQLEAGIRLRDDEITNLQSQLESQRNEINELRLQLK) is the bZIP domain. The segment at 279–307 (IRLRDDEITNLQSQLESQRNEINELRLQL) is leucine-zipper.

It belongs to the bZIP family.

The protein localises to the nucleus. The protein resides in the cytoplasm. Its function is as follows. Transcription factor that promotes the production of melanin, a pigment that serves as antioxidant, reactive oxygen species (ROS) scavenger and that protect fungal pathogens from radiation and host immune responses. This Cryptococcus neoformans var. grubii serotype A (strain H99 / ATCC 208821 / CBS 10515 / FGSC 9487) (Filobasidiella neoformans var. grubii) protein is BZIP domain-containing transcription factor BZP4.